The following is a 390-amino-acid chain: Transforming growth factor beta-1 proprotein (390 aa).

The N-terminal stretch at 1 to 29 (MPPSGLRLLPLLLPLLWLLVLTPGRPAAG) is a signal peptide. Residues 30-74 (LSTCKTIDMELVKRKRIEAIRGQILSKLRLASPPSQGEVPPGPLP) form a straightjacket domain region. The tract at residues 75–271 (EAVLALYNST…ATPLERAQQL (197 aa)) is arm domain. 3 N-linked (GlcNAc...) asparagine glycosylation sites follow: asparagine 82, asparagine 136, and asparagine 176. Positions 226–252 (DSKDNTLRVGINGFSSSRRGDLATIDG) are bowtie tail. Residues 244–246 (RGD) carry the Cell attachment site motif. Cystine bridges form between cysteine 285-cysteine 294, cysteine 293-cysteine 356, cysteine 322-cysteine 387, and cysteine 326-cysteine 389.

Belongs to the TGF-beta family. In terms of assembly, homodimer; disulfide-linked. Interacts with the serine proteases, HTRA1 and HTRA3: the interaction with either inhibits TGFB1-mediated signaling and the HTRA protease activity is required for this inhibition. May interact with THSD4; this interaction may lead to sequestration by FBN1 microfibril assembly and attenuation of TGFB signaling. Interacts with CD109, DPT and ASPN. Interacts with EFEMP2. Interacts with TSKU; the interaction contributes to regulation of the hair cycle. Interacts with TGFBR3. As to quaternary structure, homodimer; disulfide-linked. Interacts with transforming growth factor beta-1 (TGF-beta-1) chain; interaction is non-covalent and maintains TGF-beta-1 in a latent state; each latency-associated peptide (LAP) monomer interacts with TGF-beta-1 in the other monomer. Interacts with LTBP1; leading to regulation of TGF-beta-1 activation. Interacts with LRRC32/GARP; leading to regulation of TGF-beta-1 activation on the surface of activated regulatory T-cells (Tregs). Interacts with LRRC33/NRROS; leading to regulation of TGF-beta-1 activation in macrophages and microglia. Interacts (via cell attachment site) with integrins ITGAV and ITGB6 (ITGAV:ITGB6), leading to release of the active TGF-beta-1. Latency-associated peptide: Interacts with NREP; the interaction results in a decrease in TGFB1 autoinduction. Interacts with HSP90AB1; inhibits latent TGFB1 activation. Homodimer; disulfide-linked. Interacts with TGF-beta receptors (TGFBR1 and TGFBR2), leading to signal transduction. Post-translationally, transforming growth factor beta-1 proprotein: The precursor proprotein is cleaved in the Golgi apparatus by FURIN to form Transforming growth factor beta-1 (TGF-beta-1) and Latency-associated peptide (LAP) chains, which remain non-covalently linked, rendering TGF-beta-1 inactive. N-glycosylated. Deglycosylation leads to activation of Transforming growth factor beta-1 (TGF-beta-1); mechanisms triggering deglycosylation-driven activation of TGF-beta-1 are however unclear.

The protein localises to the secreted. It localises to the extracellular space. Its subcellular location is the extracellular matrix. In terms of biological role, transforming growth factor beta-1 proprotein: Precursor of the Latency-associated peptide (LAP) and Transforming growth factor beta-1 (TGF-beta-1) chains, which constitute the regulatory and active subunit of TGF-beta-1, respectively. Its function is as follows. Required to maintain the Transforming growth factor beta-1 (TGF-beta-1) chain in a latent state during storage in extracellular matrix. Associates non-covalently with TGF-beta-1 and regulates its activation via interaction with 'milieu molecules', such as LTBP1, LRRC32/GARP and LRRC33/NRROS, that control activation of TGF-beta-1. Interaction with LRRC33/NRROS regulates activation of TGF-beta-1 in macrophages and microglia. Interaction with LRRC32/GARP controls activation of TGF-beta-1 on the surface of activated regulatory T-cells (Tregs). Interaction with integrins (ITGAV:ITGB6 or ITGAV:ITGB8) results in distortion of the Latency-associated peptide chain and subsequent release of the active TGF-beta-1. Functionally, multifunctional protein that regulates the growth and differentiation of various cell types and is involved in various processes, such as normal development, immune function, microglia function and responses to neurodegeneration. Activation into mature form follows different steps: following cleavage of the proprotein in the Golgi apparatus, Latency-associated peptide (LAP) and Transforming growth factor beta-1 (TGF-beta-1) chains remain non-covalently linked rendering TGF-beta-1 inactive during storage in extracellular matrix. At the same time, LAP chain interacts with 'milieu molecules', such as LTBP1, LRRC32/GARP and LRRC33/NRROS that control activation of TGF-beta-1 and maintain it in a latent state during storage in extracellular milieus. TGF-beta-1 is released from LAP by integrins (ITGAV:ITGB6 or ITGAV:ITGB8): integrin-binding to LAP stabilizes an alternative conformation of the LAP bowtie tail and results in distortion of the LAP chain and subsequent release of the active TGF-beta-1. Once activated following release of LAP, TGF-beta-1 acts by binding to TGF-beta receptors (TGFBR1 and TGFBR2), which transduce signal. While expressed by many cells types, TGF-beta-1 only has a very localized range of action within cell environment thanks to fine regulation of its activation by Latency-associated peptide chain (LAP) and 'milieu molecules'. Plays an important role in bone remodeling: acts as a potent stimulator of osteoblastic bone formation, causing chemotaxis, proliferation and differentiation in committed osteoblasts. Can promote either T-helper 17 cells (Th17) or regulatory T-cells (Treg) lineage differentiation in a concentration-dependent manner. At high concentrations, leads to FOXP3-mediated suppression of RORC and down-regulation of IL-17 expression, favoring Treg cell development. At low concentrations in concert with IL-6 and IL-21, leads to expression of the IL-17 and IL-23 receptors, favoring differentiation to Th17 cells. Stimulates sustained production of collagen through the activation of CREB3L1 by regulated intramembrane proteolysis (RIP). Mediates SMAD2/3 activation by inducing its phosphorylation and subsequent translocation to the nucleus. Positively regulates odontoblastic differentiation in dental papilla cells, via promotion of IPO7-mediated translocation of phosphorylated SMAD2 to the nucleus and subsequent transcription of target genes. Can induce epithelial-to-mesenchymal transition (EMT) and cell migration in various cell types. The chain is Transforming growth factor beta-1 proprotein (TGFB1) from Equus caballus (Horse).